The sequence spans 402 residues: 1-deoxy-D-xylulose 5-phosphate reductoisomerase (402 aa).

Threonine 10, glycine 11, serine 12, isoleucine 13, glycine 36, arginine 37, asparagine 38, and asparagine 124 together coordinate NADPH. Lysine 125 lines the 1-deoxy-D-xylulose 5-phosphate pocket. Glutamate 126 is an NADPH binding site. Residue aspartate 150 coordinates Mn(2+). 4 residues coordinate 1-deoxy-D-xylulose 5-phosphate: serine 151, glutamate 152, serine 186, and histidine 209. Glutamate 152 contributes to the Mn(2+) binding site. Position 215 (glycine 215) interacts with NADPH. Serine 222, asparagine 227, lysine 228, and glutamate 231 together coordinate 1-deoxy-D-xylulose 5-phosphate. Glutamate 231 lines the Mn(2+) pocket.

It belongs to the DXR family. Mg(2+) serves as cofactor. Mn(2+) is required as a cofactor.

The enzyme catalyses 2-C-methyl-D-erythritol 4-phosphate + NADP(+) = 1-deoxy-D-xylulose 5-phosphate + NADPH + H(+). It functions in the pathway isoprenoid biosynthesis; isopentenyl diphosphate biosynthesis via DXP pathway; isopentenyl diphosphate from 1-deoxy-D-xylulose 5-phosphate: step 1/6. With respect to regulation, inhibited by fosmidomycin. Its function is as follows. Catalyzes the NADPH-dependent rearrangement and reduction of 1-deoxy-D-xylulose-5-phosphate (DXP) to 2-C-methyl-D-erythritol 4-phosphate (MEP). This chain is 1-deoxy-D-xylulose 5-phosphate reductoisomerase, found in Synechococcus sp. (strain ATCC 27144 / PCC 6301 / SAUG 1402/1) (Anacystis nidulans).